Consider the following 511-residue polypeptide: Bifunctional purine biosynthesis protein PurH (511 aa).

The region spanning 1 to 145 (MKKRALVSVS…KNHKFVSVIV (145 aa)) is the MGS-like domain.

This sequence belongs to the PurH family.

It catalyses the reaction (6R)-10-formyltetrahydrofolate + 5-amino-1-(5-phospho-beta-D-ribosyl)imidazole-4-carboxamide = 5-formamido-1-(5-phospho-D-ribosyl)imidazole-4-carboxamide + (6S)-5,6,7,8-tetrahydrofolate. The enzyme catalyses IMP + H2O = 5-formamido-1-(5-phospho-D-ribosyl)imidazole-4-carboxamide. It participates in purine metabolism; IMP biosynthesis via de novo pathway; 5-formamido-1-(5-phospho-D-ribosyl)imidazole-4-carboxamide from 5-amino-1-(5-phospho-D-ribosyl)imidazole-4-carboxamide (10-formyl THF route): step 1/1. Its pathway is purine metabolism; IMP biosynthesis via de novo pathway; IMP from 5-formamido-1-(5-phospho-D-ribosyl)imidazole-4-carboxamide: step 1/1. The sequence is that of Bifunctional purine biosynthesis protein PurH from Bacillus cereus (strain ATCC 14579 / DSM 31 / CCUG 7414 / JCM 2152 / NBRC 15305 / NCIMB 9373 / NCTC 2599 / NRRL B-3711).